We begin with the raw amino-acid sequence, 249 residues long: Probable transcriptional regulatory protein ZMO0153 (249 aa).

The protein belongs to the TACO1 family.

The protein localises to the cytoplasm. The protein is Probable transcriptional regulatory protein ZMO0153 of Zymomonas mobilis subsp. mobilis (strain ATCC 31821 / ZM4 / CP4).